Here is a 518-residue protein sequence, read N- to C-terminus: Cytochrome P450 monooxygenase pyr3 (518 aa).

Residues 26–46 traverse the membrane as a helical segment; that stretch reads GVAIVLFLAPLALHLVSSYLF. Cys-458 is a binding site for heme.

It belongs to the cytochrome P450 family. The cofactor is heme.

It localises to the membrane. It functions in the pathway secondary metabolite biosynthesis; terpenoid biosynthesis. Functionally, cytochrome P450 monooxygenase; part of the gene cluster that mediates the biosynthesis of pyripyropene A, a specific human acyl-coenzyme A:cholesterol acyltransferase 2 inhibitor. The first step of the pathway is the synthesis of nicotinyl-CoA from nicotinic acid by the nicotinic acid-CoA ligase pyr1. Nicotinyl-CoA is then a substrate of polyketide synthase pyr2 to produce 4-hydroxy-6-(3-pyridinyl)-2H-pyran-2-one (HPPO) which is further prenylated by the polyprenyl transferase pyr6 to yield farnesyl-HPPO. The next steps consist of an epoxidation of farnesyl-HPPO to epoxyfarnesyl-HPPO by FAD-dependent monooxygenase pyr5 and a cyclization of the terpenoid portion by the terpene cyclase pyr4 to yield deacetyl-pyripyropene E. The 2 cytochrome P450 monooxygenases pyr3 and pyr9, and the 2 acetyltransferases pyr7 and pyr8 are involved in the conversion of deacetyl-pyripyropene E into pyripyropene A through several cycles of oxidation and acetylation steps. Pyr7 acetylates deacetyl-pyripyropene E to pyripyropene E which is oxidized to 11-deacetyl-pyripyropene O by pyr3, which is in turn acetylated into pyripyropene O by pyr8. Pyripyropene O is then oxidized to deacetyl-pyripyropene A by pyr9. Deacetyl-pyripyropene A is finally acetylated to pyripyropene A by pyr8. This chain is Cytochrome P450 monooxygenase pyr3, found in Aspergillus fumigatus (strain ATCC MYA-4609 / CBS 101355 / FGSC A1100 / Af293) (Neosartorya fumigata).